A 540-amino-acid polypeptide reads, in one-letter code: NAD(P)H-quinone oxidoreductase subunit 2 B, chloroplastic (540 aa).

13 helical membrane-spanning segments follow: residues 24-44 (LLLF…GLIL), 57-77 (IPWL…ALLF), 99-119 (IFQF…VEYI), 124-144 (MAIT…MFLC), 149-169 (FITI…LSGY), 183-203 (YLLM…WLYG), 227-247 (PGIS…LSPA), 325-345 (WHLL…LIAI), 353-373 (MLAY…IVGD), 384-404 (YMLF…LFGL), 425-445 (ALSL…AGFF), 448-468 (LYLF…IGLL), and 514-534 (MIVC…IIAI).

It belongs to the complex I subunit 2 family. NDH is composed of at least 16 different subunits, 5 of which are encoded in the nucleus.

Its subcellular location is the plastid. The protein localises to the chloroplast thylakoid membrane. It catalyses the reaction a plastoquinone + NADH + (n+1) H(+)(in) = a plastoquinol + NAD(+) + n H(+)(out). The enzyme catalyses a plastoquinone + NADPH + (n+1) H(+)(in) = a plastoquinol + NADP(+) + n H(+)(out). Functionally, NDH shuttles electrons from NAD(P)H:plastoquinone, via FMN and iron-sulfur (Fe-S) centers, to quinones in the photosynthetic chain and possibly in a chloroplast respiratory chain. The immediate electron acceptor for the enzyme in this species is believed to be plastoquinone. Couples the redox reaction to proton translocation, and thus conserves the redox energy in a proton gradient. The protein is NAD(P)H-quinone oxidoreductase subunit 2 B, chloroplastic of Coffea arabica (Arabian coffee).